Reading from the N-terminus, the 244-residue chain is 2,5-diamino-6-ribosylamino-4(3H)-pyrimidinone 5'-phosphate reductase (244 aa).

Residues Thr-79, Asp-83, Val-159, and 182–186 (GANVI) each bind NADP(+).

It belongs to the HTP reductase family. Homodimer.

It carries out the reaction 2,5-diamino-6-(1-D-ribitylamino)pyrimidin-4(3H)-one 5'-phosphate + NADP(+) = 2,5-diamino-6-(1-D-ribosylamino)pyrimidin-4(3H)-one 5'-phosphate + NADPH + H(+). The enzyme catalyses 2,5-diamino-6-(1-D-ribitylamino)pyrimidin-4(3H)-one 5'-phosphate + NAD(+) = 2,5-diamino-6-(1-D-ribosylamino)pyrimidin-4(3H)-one 5'-phosphate + NADH + H(+). It participates in cofactor biosynthesis; riboflavin biosynthesis. In terms of biological role, catalyzes an early step in riboflavin biosynthesis, the NADPH-dependent reduction of the ribose side chain of 2,5-diamino-6-ribosylamino-4(3H)-pyrimidinone 5'-phosphate, yielding 2,5-diamino-6-ribitylamino-4(3H)-pyrimidinone 5'-phosphate. The sequence is that of 2,5-diamino-6-ribosylamino-4(3H)-pyrimidinone 5'-phosphate reductase (RIB7) from Saccharomyces cerevisiae (strain ATCC 204508 / S288c) (Baker's yeast).